A 229-amino-acid polypeptide reads, in one-letter code: Uracil-DNA glycosylase (229 aa).

The Proton acceptor role is filled by Asp64.

This sequence belongs to the uracil-DNA glycosylase (UDG) superfamily. UNG family.

The protein resides in the cytoplasm. The enzyme catalyses Hydrolyzes single-stranded DNA or mismatched double-stranded DNA and polynucleotides, releasing free uracil.. Excises uracil residues from the DNA which can arise as a result of misincorporation of dUMP residues by DNA polymerase or due to deamination of cytosine. This is Uracil-DNA glycosylase from Escherichia coli O7:K1 (strain IAI39 / ExPEC).